Reading from the N-terminus, the 152-residue chain is Superoxide dismutase [Cu-Zn] 1 (152 aa).

The Cu cation site is built by His-45, His-47, and His-62. Cys-56 and Cys-145 are oxidised to a cystine. His-62, His-70, His-79, and Asp-82 together coordinate Zn(2+). A Cu cation-binding site is contributed by His-119.

The protein belongs to the Cu-Zn superoxide dismutase family. In terms of assembly, homodimer. Cu cation serves as cofactor. Zn(2+) is required as a cofactor.

It is found in the cytoplasm. The catalysed reaction is 2 superoxide + 2 H(+) = H2O2 + O2. Its function is as follows. Destroys radicals which are normally produced within the cells and which are toxic to biological systems. This is Superoxide dismutase [Cu-Zn] 1 (SODCC.1) from Mesembryanthemum crystallinum (Common ice plant).